Reading from the N-terminus, the 1331-residue chain is ABC multidrug transporter MDR2 (1331 aa).

The interval 1 to 50 is disordered; sequence MVEPSEKPNTQNDDVSKQEIRNPVSSSSSTSDKEKVAKKGNSDATKSLTP. Positions 31-41 are enriched in basic and acidic residues; sequence SDKEKVAKKGN. 4 helical membrane-spanning segments follow: residues 93–113, 147–167, 219–239, and 242–262; these read MILL…LPLF, YFVY…VGFI, KVGL…IGYV, and WKLA…MGGI. Residues 97–387 enclose the ABC transmembrane type-1 1 domain; it reads AIVSLASIAA…VAPNTQAFAS (291 aa). Asn293 carries N-linked (GlcNAc...) asparagine glycosylation. Helical transmembrane passes span 325 to 345 and 358 to 378; these read LGIM…LGFW and LSAI…IGNV. One can recognise an ABC transporter 1 domain in the interval 422–667; the sequence is IEFRGIKHIY…KGTYLQLVEA (246 aa). Position 457-464 (457-464) interacts with ATP; the sequence is GPSGSGKS. Asn529 is a glycosylation site (N-linked (GlcNAc...) asparagine). 2 consecutive transmembrane segments (helical) span residues 762-782 and 808-828; these read LCGF…SVFF and LMFL…GVIF. The ABC transmembrane type-1 2 domain occupies 764-1051; it reads GFFFAVLSGA…VFSFSPDMGK (288 aa). Asn860 carries N-linked (GlcNAc...) asparagine glycosylation. Helical transmembrane passes span 884 to 904, 910 to 930, 995 to 1015, and 1025 to 1045; these read LGTI…ALAF, LVCI…FWIL, ASQS…GGLL, and FFLC…VFSF. The region spanning 1086 to 1324 is the ABC transporter 2 domain; sequence IEFRDVHFRY…KGRYYELVHM (239 aa). The N-linked (GlcNAc...) asparagine glycan is linked to Asn1108. Residue 1121–1128 coordinates ATP; the sequence is GPSGCGKS.

Belongs to the ABC transporter superfamily. ABCB family. Multidrug resistance exporter (TC 3.A.1.201) subfamily.

It is found in the cell membrane. The enzyme catalyses itraconazole(in) + ATP + H2O = itraconazole(out) + ADP + phosphate + H(+). ABC-type efflux transporter involved in the modulation susceptibility to itraconazole. The polypeptide is ABC multidrug transporter MDR2 (Trichophyton rubrum (strain ATCC MYA-4607 / CBS 118892) (Athlete's foot fungus)).